We begin with the raw amino-acid sequence, 172 residues long: Spore coat protein X (172 aa).

Its subcellular location is the spore coat. The polypeptide is Spore coat protein X (cotX) (Bacillus subtilis (strain 168)).